Consider the following 390-residue polypeptide: 2-oxoisovalerate dehydrogenase subunit beta, mitochondrial (390 aa).

Residues 1 to 48 (MAAVAARAGGLLRLGAAGAERRRRGLRCAALVQGFLQPAVDDASQKRR) constitute a mitochondrion transit peptide. Tyr-150 is a thiamine diphosphate binding site. Positions 176, 178, 179, 226, and 229 each coordinate K(+). N6-acetyllysine is present on Lys-230. Asn-231 contributes to the K(+) binding site. Lys-239 bears the N6-acetyllysine mark.

Heterotetramer of 2 alpha/BCKDHA and 2 beta chains/BCKDHB that forms the branched-chain alpha-keto acid decarboxylase (E1) component of the BCKD complex. The branched-chain alpha-ketoacid dehydrogenase is a large complex composed of three major building blocks E1, E2 and E3. It is organized around E2, a 24-meric cubic core composed of DBT, to which are associated 6 to 12 copies of E1, and approximately 6 copies of the dehydrogenase E3, a DLD dimer. Requires thiamine diphosphate as cofactor.

The protein localises to the mitochondrion matrix. The enzyme catalyses N(6)-[(R)-lipoyl]-L-lysyl-[protein] + 3-methyl-2-oxobutanoate + H(+) = N(6)-[(R)-S(8)-2-methylpropanoyldihydrolipoyl]-L-lysyl-[protein] + CO2. Its function is as follows. Together with BCKDHA forms the heterotetrameric E1 subunit of the mitochondrial branched-chain alpha-ketoacid dehydrogenase (BCKD) complex. The BCKD complex catalyzes the multi-step oxidative decarboxylation of alpha-ketoacids derived from the branched-chain amino-acids valine, leucine and isoleucine producing CO2 and acyl-CoA which is subsequently utilized to produce energy. The E1 subunit catalyzes the first step with the decarboxylation of the alpha-ketoacid forming an enzyme-product intermediate. A reductive acylation mediated by the lipoylamide cofactor of E2 extracts the acyl group from the E1 active site for the next step of the reaction. This chain is 2-oxoisovalerate dehydrogenase subunit beta, mitochondrial, found in Rattus norvegicus (Rat).